The sequence spans 234 residues: Uridylate kinase (234 aa).

Residues 8–11 (KLSG), Gly51, and Arg55 contribute to the ATP site. Residues Asp68 and 129–136 (TSNPFFTT) each bind UMP. ATP contacts are provided by Thr156, Tyr162, and Asp165.

Belongs to the UMP kinase family. In terms of assembly, homohexamer.

It localises to the cytoplasm. The enzyme catalyses UMP + ATP = UDP + ADP. The protein operates within pyrimidine metabolism; CTP biosynthesis via de novo pathway; UDP from UMP (UMPK route): step 1/1. Inhibited by UTP. Catalyzes the reversible phosphorylation of UMP to UDP. The sequence is that of Uridylate kinase from Fervidobacterium nodosum (strain ATCC 35602 / DSM 5306 / Rt17-B1).